Consider the following 198-residue polypeptide: Probable nicotinate-nucleotide adenylyltransferase (198 aa).

Belongs to the NadD family.

It carries out the reaction nicotinate beta-D-ribonucleotide + ATP + H(+) = deamido-NAD(+) + diphosphate. It participates in cofactor biosynthesis; NAD(+) biosynthesis; deamido-NAD(+) from nicotinate D-ribonucleotide: step 1/1. Catalyzes the reversible adenylation of nicotinate mononucleotide (NaMN) to nicotinic acid adenine dinucleotide (NaAD). This Herpetosiphon aurantiacus (strain ATCC 23779 / DSM 785 / 114-95) protein is Probable nicotinate-nucleotide adenylyltransferase.